We begin with the raw amino-acid sequence, 1150 residues long: DNA polymerase (1150 aa).

The disordered stretch occupies residues 1-53 (MSLVQGHGTSGLFTEPPNPINQQESSGPSLPAQDAAQAFASSPRAGATSTIVN).

Belongs to the DNA polymerase type-B family. In terms of assembly, heterodimer with the terminal protein; this heterodimer binds to bp 9 to 18 of the genome. Forms a complex with viral pTP, DBP and hosts NFIA and POU2F1/OCT1 for initiation of replication.

The protein localises to the host nucleus. It catalyses the reaction DNA(n) + a 2'-deoxyribonucleoside 5'-triphosphate = DNA(n+1) + diphosphate. In terms of biological role, eukaryotic-type DNA polymerase involved in viral genomic replication. DNA synthesis is protein primed, and acts in a strand displacement replication. Assembles in complex with viral pTP, DBP, host NFIA and host POU2F1/OCT1 on viral origin of replication. The polymerase covalently transfers dCMP onto pTP, thereby initiating complementary strand synthesis. In Canis lupus familiaris (Dog), this protein is DNA polymerase.